The chain runs to 385 residues: Mitochondrial fission regulator 2 (385 aa).

Ser2 is subject to N-acetylserine. Ser119 is subject to Phosphoserine. The interval 195–268 is disordered; it reads SVDPDQLPGS…SHHSKSQRNK (74 aa). Pro residues predominate over residues 207 to 216; the sequence is SPPPPPPLPP. Residues 231-257 are compositionally biased toward polar residues; sequence PGSNNICDSDNPATEMSKQNPAANKTN. A phosphoserine mark is found at Ser291 and Ser328. Positions 331–363 are disordered; that stretch reads KENRSWESSPFSSPETSRFGHHISQSEGQRTKE. The segment covering 336 to 346 has biased composition (polar residues); sequence WESSPFSSPET.

It belongs to the MTFR1 family.

It localises to the mitochondrion. Functionally, may play a role in mitochondrial aerobic respiration essentially in the testis. Can also promote mitochondrial fission. The polypeptide is Mitochondrial fission regulator 2 (MTFR2) (Homo sapiens (Human)).